The sequence spans 695 residues: Threonine--tRNA ligase 1, cytoplasmic (695 aa).

Residues 1 to 21 form a disordered region; sequence MSEEKASSPSGKMDGEKPLNP. A TGS domain is found at 51-115; it reads DSKPIKVTLP…ETDCTLELLK (65 aa). An N6-acetyllysine modification is found at Lys-215. Thr-218 is modified (phosphothreonine). Tyr-270 bears the Phosphotyrosine mark. Thr-425 is modified (phosphothreonine).

This sequence belongs to the class-II aminoacyl-tRNA synthetase family. Homodimer. Post-translationally, ISGylated.

It is found in the cytoplasm. The catalysed reaction is tRNA(Thr) + L-threonine + ATP = L-threonyl-tRNA(Thr) + AMP + diphosphate + H(+). In terms of biological role, catalyzes the attachment of threonine to tRNA(Thr) in a two-step reaction: threonine is first activated by ATP to form Thr-AMP and then transferred to the acceptor end of tRNA(Thr). Also edits incorrectly charged tRNA(Thr) via its editing domain, at the post-transfer stage. This is Threonine--tRNA ligase 1, cytoplasmic (Tars1) from Rattus norvegicus (Rat).